We begin with the raw amino-acid sequence, 823 residues long: Pentatricopeptide repeat-containing protein At4g33990 (823 aa).

16 PPR repeats span residues 85-115 (NVCI…IQNR), 116-151 (DVYA…GLTP), 152-183 (DYRT…GFMW), 184-214 (DVYV…MPVR), 215-249 (DMGS…DSVT), 252-280 (SLLS…GLES), 281-311 (ELFV…MYVR), 312-346 (DLIS…RIQP), 347-381 (DCLT…GWFL), 383-413 (DITI…LPNT), 414-448 (DVIS…GEIA), 450-484 (NQGT…GLYL), 485-515 (DVFV…IPRV), 516-550 (NSVP…GVKP), 551-581 (DHIT…MQTD), and 587-617 (SLKH…MSLQ). Residues 622 to 697 (IWGALLSACR…TPGWSSMEVD (76 aa)) are type E motif. The segment at 698 to 728 (NKVEVFYTGNQTHPMYEEMYRELTALQAKLK) is type E(+) motif. The type DYW motif stretch occupies residues 729–823 (MIGYVPDHRF…NGVCSCGDYW (95 aa)).

It belongs to the PPR family. PCMP-H subfamily.

This chain is Pentatricopeptide repeat-containing protein At4g33990 (EMB2758), found in Arabidopsis thaliana (Mouse-ear cress).